The chain runs to 80 residues: Cytochrome c oxidase subunit 7A1, mitochondrial (80 aa).

A mitochondrion-targeting transit peptide spans 1–21 (MRALRVSQALVRSFSSTARNR). The Mitochondrial matrix portion of the chain corresponds to 22 to 46 (LENRVAEKQKIFQADNDLPVHLKGG). A helical membrane pass occupies residues 47-75 (ATDNILYRVTMTLCLGGTVYSLYCLGWAS). Residues 76 to 80 (FPHKK) lie on the Mitochondrial intermembrane side of the membrane.

Belongs to the cytochrome c oxidase VIIa family. In terms of assembly, component of the complex IV (CIV, cytochrome c oxidase), a multisubunit enzyme composed of 14 subunits. The complex is composed of a catalytic core of 3 subunits MT-CO1, MT-CO2 and MT-CO3, encoded in the mitochondrial DNA, and 11 supernumerary subunits COX4I1 (or COX4I2), COX5A, COX5B, COX6A2 (or COX6A1), COX6B1 (or COX6B2), COX6C, COX7A1 (or COX7A2), COX7B, COX7C, COX8B and NDUFA4, which are encoded in the nuclear genome. The complex exists as a monomer or a dimer and forms supercomplexes (SCs) in the inner mitochondrial membrane with NADH-ubiquinone oxidoreductase (complex I, CI) and ubiquinol-cytochrome c oxidoreductase (cytochrome b-c1 complex, complex III, CIII), resulting in different assemblies (supercomplex SCI(1)III(2)IV(1) and megacomplex MCI(2)III(2)IV(2)).

Its subcellular location is the mitochondrion inner membrane. The protein operates within energy metabolism; oxidative phosphorylation. Functionally, component of the mitochondrial respiratory complex IV (CIV, also named cytochrome c oxidase complex), the last enzyme in the mitochondrial electron transport chain which drives oxidative phosphorylation. The CIV complex is the component of the respiratory chain that catalyzes the reduction of oxygen to water. Acts as an assembly factor that specifically drives the homodimerization of CIV complexes, mediating the formation of mitochondrial respiratory supercomplexes (respirasomes) containing two CIV: supercomplxes with two molecules of CIV show improved activity. Despite being highly expressed in brown adipose tissue, not required for thermogenesis. This is Cytochrome c oxidase subunit 7A1, mitochondrial (COX7A1) from Sus scrofa (Pig).